The following is a 408-amino-acid chain: tRNA pseudouridine synthase D (408 aa).

The active-site Nucleophile is the aspartate 76. The TRUD domain occupies 149–362 (GFINYYDSQR…NSFERKVRIL (214 aa)).

This sequence belongs to the pseudouridine synthase TruD family.

The catalysed reaction is uridine(13) in tRNA = pseudouridine(13) in tRNA. In terms of biological role, responsible for synthesis of pseudouridine from uracil-13 in transfer RNAs. This chain is tRNA pseudouridine synthase D, found in Leptospira interrogans serogroup Icterohaemorrhagiae serovar Lai (strain 56601).